A 234-amino-acid polypeptide reads, in one-letter code: Ribonuclease Trv (234 aa).

Cystine bridges form between Cys-5–Cys-24, Cys-13–Cys-59, Cys-23–Cys-125, Cys-67–Cys-117, and Cys-189–Cys-224. The N-linked (GlcNAc...) asparagine glycan is linked to Asn-15. His-52 is an active-site residue. A glycan (N-linked (GlcNAc...) asparagine) is linked at Asn-75. Residues Glu-110 and His-114 contribute to the active site.

The protein belongs to the RNase T2 family.

It carries out the reaction a ribonucleotidyl-ribonucleotide-RNA + H2O = a 3'-end 3'-phospho-ribonucleotide-RNA + a 5'-end dephospho-ribonucleoside-RNA + H(+). In terms of biological role, this is a base non-specific and adenylic acid preferential ribonuclease. In Hypocrea rufa (Trichoderma viride), this protein is Ribonuclease Trv.